The primary structure comprises 595 residues: Elongation factor 4 (595 aa).

One can recognise a tr-type G domain in the interval 2-183 (KNIRNFCIIA…AIVEQVPAPA (182 aa)). Residues 14-19 (DHGKST) and 130-133 (NKVD) each bind GTP.

Belongs to the TRAFAC class translation factor GTPase superfamily. Classic translation factor GTPase family. LepA subfamily.

It localises to the cell inner membrane. The catalysed reaction is GTP + H2O = GDP + phosphate + H(+). Functionally, required for accurate and efficient protein synthesis under certain stress conditions. May act as a fidelity factor of the translation reaction, by catalyzing a one-codon backward translocation of tRNAs on improperly translocated ribosomes. Back-translocation proceeds from a post-translocation (POST) complex to a pre-translocation (PRE) complex, thus giving elongation factor G a second chance to translocate the tRNAs correctly. Binds to ribosomes in a GTP-dependent manner. The chain is Elongation factor 4 from Porphyromonas gingivalis (strain ATCC 33277 / DSM 20709 / CIP 103683 / JCM 12257 / NCTC 11834 / 2561).